Here is a 493-residue protein sequence, read N- to C-terminus: Probable mannosyl-oligosaccharide alpha-1,2-mannosidase 1B (493 aa).

An N-terminal signal peptide occupies residues 1 to 18 (MHLPSLSVALALVSSSLA). N87 and N174 each carry an N-linked (GlcNAc...) asparagine glycan. C324 and C353 are disulfide-bonded. E367 (proton donor) is an active-site residue. A glycan (N-linked (GlcNAc...) asparagine) is linked at N489.

The protein belongs to the glycosyl hydrolase 47 family. Monomer. The cofactor is Ca(2+). Mg(2+) is required as a cofactor.

The protein resides in the cytoplasmic vesicle lumen. The catalysed reaction is N(4)-(alpha-D-Man-(1-&gt;2)-alpha-D-Man-(1-&gt;2)-alpha-D-Man-(1-&gt;3)-[alpha-D-Man-(1-&gt;2)-alpha-D-Man-(1-&gt;3)-[alpha-D-Man-(1-&gt;2)-alpha-D-Man-(1-&gt;6)]-alpha-D-Man-(1-&gt;6)]-beta-D-Man-(1-&gt;4)-beta-D-GlcNAc-(1-&gt;4)-beta-D-GlcNAc)-L-asparaginyl-[protein] (N-glucan mannose isomer 9A1,2,3B1,2,3) + 4 H2O = N(4)-(alpha-D-Man-(1-&gt;3)-[alpha-D-Man-(1-&gt;3)-[alpha-D-Man-(1-&gt;6)]-alpha-D-Man-(1-&gt;6)]-beta-D-Man-(1-&gt;4)-beta-D-GlcNAc-(1-&gt;4)-beta-D-GlcNAc)-L-asparaginyl-[protein] (N-glucan mannose isomer 5A1,2) + 4 beta-D-mannose. It carries out the reaction N(4)-(alpha-D-Man-(1-&gt;2)-alpha-D-Man-(1-&gt;2)-alpha-D-Man-(1-&gt;3)-[alpha-D-Man-(1-&gt;3)-[alpha-D-Man-(1-&gt;2)-alpha-D-Man-(1-&gt;6)]-alpha-D-Man-(1-&gt;6)]-beta-D-Man-(1-&gt;4)-beta-D-GlcNAc-(1-&gt;4)-beta-D-GlcNAc)-L-asparaginyl-[protein] (N-glucan mannose isomer 8A1,2,3B1,3) + 3 H2O = N(4)-(alpha-D-Man-(1-&gt;3)-[alpha-D-Man-(1-&gt;3)-[alpha-D-Man-(1-&gt;6)]-alpha-D-Man-(1-&gt;6)]-beta-D-Man-(1-&gt;4)-beta-D-GlcNAc-(1-&gt;4)-beta-D-GlcNAc)-L-asparaginyl-[protein] (N-glucan mannose isomer 5A1,2) + 3 beta-D-mannose. The protein operates within protein modification; protein glycosylation. Involved in the maturation of Asn-linked oligosaccharides. Progressively trims alpha-1,2-linked mannose residues from Man(9)GlcNAc(2) to produce Man(5)GlcNAc(2). This is Probable mannosyl-oligosaccharide alpha-1,2-mannosidase 1B (mns1B) from Aspergillus fumigatus (strain CBS 144.89 / FGSC A1163 / CEA10) (Neosartorya fumigata).